A 443-amino-acid chain; its full sequence is Mitochondrial enolase superfamily member 1 (443 aa).

Substrate contacts are provided by residues 24-26 (GSD) and Tyr-34. Position 148 is a phosphoserine (Ser-148). Lys-220 is a binding site for substrate. Residue Lys-222 is the Proton donor/acceptor of the active site. Asp-250 serves as a coordination point for Mg(2+). Residues Asn-252, Glu-276, Glu-305, 355–357 (HAG), and Glu-386 contribute to the substrate site. Mg(2+) contacts are provided by Glu-276 and Glu-305. His-355 is a catalytic residue.

It belongs to the mandelate racemase/muconate lactonizing enzyme family. ENOSF1 subfamily. Mg(2+) serves as cofactor. Post-translationally, could be sumoylated.

The protein localises to the mitochondrion. The catalysed reaction is L-fuconate = 2-dehydro-3-deoxy-L-fuconate + H2O. Plays a role in the catabolism of L-fucose, a sugar that is part of the carbohydrates that are attached to cellular glycoproteins. Catalyzes the dehydration of L-fuconate to 2-keto-3-deoxy-L-fuconate by the abstraction of the 2-proton to generate an enediolate intermediate that is stabilized by the magnesium ion. May down-regulate thymidylate synthase activity, possibly already at the RNA level, by promoting the degradation of TYMS mRNA via an antisense RNA-based mechanism. The polypeptide is Mitochondrial enolase superfamily member 1 (ENOSF1) (Pongo abelii (Sumatran orangutan)).